The primary structure comprises 325 residues: Protease HtpX homolog 2 (325 aa).

Transmembrane regions (helical) follow at residues 17–37 (IAIL…FFGF) and 42–62 (LLIT…WLFG). His146 contributes to the Zn(2+) binding site. The active site involves Glu147. His150 lines the Zn(2+) pocket. 2 helical membrane-spanning segments follow: residues 158–178 (LLLA…GLWW) and 195–215 (ILFL…LFVL). Glu222 is a binding site for Zn(2+).

Belongs to the peptidase M48B family. Zn(2+) is required as a cofactor.

Its subcellular location is the cell membrane. The sequence is that of Protease HtpX homolog 2 from Sulfurisphaera tokodaii (strain DSM 16993 / JCM 10545 / NBRC 100140 / 7) (Sulfolobus tokodaii).